Reading from the N-terminus, the 885-residue chain is DNA mismatch repair protein MutS (885 aa).

Residues 1 to 67 (MAPGEQQLSL…SNNDDEGLPR (67 aa)) are disordered. Basic and acidic residues predominate over residues 26–36 (SEDKTEESERP). 691–698 (GPNASGKS) contributes to the ATP binding site.

This sequence belongs to the DNA mismatch repair MutS family.

This protein is involved in the repair of mismatches in DNA. It is possible that it carries out the mismatch recognition step. This protein has a weak ATPase activity. This chain is DNA mismatch repair protein MutS, found in Synechococcus sp. (strain RCC307).